Here is a 426-residue protein sequence, read N- to C-terminus: Glutamate-1-semialdehyde 2,1-aminomutase (426 aa).

At K265 the chain carries N6-(pyridoxal phosphate)lysine.

The protein belongs to the class-III pyridoxal-phosphate-dependent aminotransferase family. HemL subfamily. As to quaternary structure, homodimer. Pyridoxal 5'-phosphate serves as cofactor.

It localises to the cytoplasm. It carries out the reaction (S)-4-amino-5-oxopentanoate = 5-aminolevulinate. Its pathway is porphyrin-containing compound metabolism; protoporphyrin-IX biosynthesis; 5-aminolevulinate from L-glutamyl-tRNA(Glu): step 2/2. The chain is Glutamate-1-semialdehyde 2,1-aminomutase from Sodalis glossinidius (strain morsitans).